A 236-amino-acid polypeptide reads, in one-letter code: 2,3,4,5-tetrahydropyridine-2,6-dicarboxylate N-acetyltransferase (236 aa).

It belongs to the transferase hexapeptide repeat family. DapH subfamily.

It carries out the reaction (S)-2,3,4,5-tetrahydrodipicolinate + acetyl-CoA + H2O = L-2-acetamido-6-oxoheptanedioate + CoA. The protein operates within amino-acid biosynthesis; L-lysine biosynthesis via DAP pathway; LL-2,6-diaminopimelate from (S)-tetrahydrodipicolinate (acetylase route): step 1/3. Functionally, catalyzes the transfer of an acetyl group from acetyl-CoA to tetrahydrodipicolinate. The sequence is that of 2,3,4,5-tetrahydropyridine-2,6-dicarboxylate N-acetyltransferase from Bacillus licheniformis (strain ATCC 14580 / DSM 13 / JCM 2505 / CCUG 7422 / NBRC 12200 / NCIMB 9375 / NCTC 10341 / NRRL NRS-1264 / Gibson 46).